The sequence spans 179 residues: Deoxyuridine 5'-triphosphate nucleotidohydrolase, mitochondrial (179 aa).

The transit peptide at 1 to 41 (MPIEQKYFSLFSNLFKRLTTNNNNNNYLKMAPPNFETFKVK) directs the protein to the mitochondrion. Residues 97–99 (RSG), 111–114 (GVID), Gly122, Arg165, and 170–171 (FG) each bind dUTP.

It belongs to the dUTPase family. Homotrimer. The cofactor is Mg(2+).

Its subcellular location is the mitochondrion. It catalyses the reaction dUTP + H2O = dUMP + diphosphate + H(+). It participates in pyrimidine metabolism; dUMP biosynthesis; dUMP from dCTP (dUTP route): step 2/2. In terms of biological role, this enzyme is involved in nucleotide metabolism: it produces dUMP, the immediate precursor of thymidine nucleotides and it decreases the intracellular concentration of dUTP so that uracil cannot be incorporated into DNA. This chain is Deoxyuridine 5'-triphosphate nucleotidohydrolase, mitochondrial (dut), found in Dictyostelium discoideum (Social amoeba).